The sequence spans 234 residues: Probable plastid-lipid-associated protein 5, chloroplastic (234 aa).

The N-terminal 45 residues, 1 to 45 (MALPWCLKTGVLTSPAAGFNHPSDSGFAVPTKLLSIRKGDRERLR), are a transit peptide targeting the chloroplast.

The protein belongs to the PAP/fibrillin family.

Its subcellular location is the plastid. The protein resides in the chloroplast thylakoid. The chain is Probable plastid-lipid-associated protein 5, chloroplastic (PAP5) from Arabidopsis thaliana (Mouse-ear cress).